Consider the following 916-residue polypeptide: Dual serine/threonine and tyrosine protein kinase (916 aa).

Residues 1-19 (MQRDGTRSARRMDEGDRRT) are compositionally biased toward basic and acidic residues. A disordered region spans residues 1-27 (MQRDGTRSARRMDEGDRRTGSAGRSGS). The 255-residue stretch at 641 to 895 (PRIGRELGRG…PLMGIVQPML (255 aa)) folds into the Protein kinase domain. Residues 647–655 (LGRGQYGVV) and Lys670 each bind ATP. Residue Asp766 is the Proton acceptor of the active site.

This sequence belongs to the protein kinase superfamily. Ser/Thr protein kinase family.

It is found in the cytoplasm. It localises to the cell membrane. The protein resides in the apical cell membrane. The protein localises to the basolateral cell membrane. Its subcellular location is the cell junction. The enzyme catalyses L-seryl-[protein] + ATP = O-phospho-L-seryl-[protein] + ADP + H(+). It carries out the reaction L-threonyl-[protein] + ATP = O-phospho-L-threonyl-[protein] + ADP + H(+). The catalysed reaction is L-tyrosyl-[protein] + ATP = O-phospho-L-tyrosyl-[protein] + ADP + H(+). May act as a positive regulator of ERK phosphorylation downstream of fibroblast growth factor-receptor activation. May induce both caspase-dependent apoptosis and caspase-independent cell death. May play a role in the embryonic development. The protein is Dual serine/threonine and tyrosine protein kinase (dstyk) of Xenopus laevis (African clawed frog).